Here is a 400-residue protein sequence, read N- to C-terminus: Phosphoglycerate kinase (400 aa).

Substrate is bound by residues 22 to 24, Arg-38, 61 to 64, Arg-120, and Arg-153; these read DFN and HLGR. ATP-binding positions include Lys-206, Gly-297, Glu-328, and 354-357; that span reads GGDT.

It belongs to the phosphoglycerate kinase family. As to quaternary structure, monomer.

The protein localises to the cytoplasm. It catalyses the reaction (2R)-3-phosphoglycerate + ATP = (2R)-3-phospho-glyceroyl phosphate + ADP. The protein operates within carbohydrate degradation; glycolysis; pyruvate from D-glyceraldehyde 3-phosphate: step 2/5. The protein is Phosphoglycerate kinase of Campylobacter curvus (strain 525.92).